The sequence spans 417 residues: Peptide chain release factor subunit 1 (417 aa).

This sequence belongs to the eukaryotic release factor 1 family. As to quaternary structure, heterodimer of two subunits, one of which binds GTP.

It is found in the cytoplasm. Its function is as follows. Directs the termination of nascent peptide synthesis (translation) in response to the termination codons UAA, UAG and UGA. In Thermoplasma acidophilum (strain ATCC 25905 / DSM 1728 / JCM 9062 / NBRC 15155 / AMRC-C165), this protein is Peptide chain release factor subunit 1 (prf1).